A 446-amino-acid chain; its full sequence is MKFRSTALVKGFRQSAPYVNAHRDKTVVIMLGGEAIADPNFANIVNDIALLNSLGLRIVIVYGTRPQMRSLLKQTEHHAPFHKGIRITDEQTLELVKQIAGQLQLDITARLSMSLNNTPMAGAQINVISGNFVIAQPLGVDDGIDYCHSGRVRRIDTQGINRMLDQQSIVLLGPVASSVTGECFNLLSEDVATQLAIRLNADKLIGFCSEQGVLNEKGQILAELFPSEAEEILQRLEKELTPENGKLTGTMRFLKGAISACKAGVPRSHLISYKEDGALIQELFSFDGIGTQVVMASSEQVRDAEIDDIGGILDLIRPLEEEGILVRRSREQLEQEIAQFTIIEKDGLVIACAALYPFPEEGMAEMGCVAVHPDYRDGDRGVTLLNRLRSKAKQFKLSQLFVLTTRSLHWFREQGFIEVDVSHLPIKKQKLYNFQRKSKILVLKGL.

In terms of domain architecture, N-acetyltransferase spans 299-438 (EQVRDAEIDD…QKLYNFQRKS (140 aa)).

It belongs to the acetyltransferase family. ArgA subfamily.

The protein localises to the cytoplasm. The catalysed reaction is L-glutamate + acetyl-CoA = N-acetyl-L-glutamate + CoA + H(+). It participates in amino-acid biosynthesis; L-arginine biosynthesis; N(2)-acetyl-L-ornithine from L-glutamate: step 1/4. The chain is Amino-acid acetyltransferase from Aliivibrio fischeri (strain ATCC 700601 / ES114) (Vibrio fischeri).